We begin with the raw amino-acid sequence, 426 residues long: Casein kinase I (426 aa).

Residues 9–278 (YRISRKIGGG…LRKLLREMFV (270 aa)) form the Protein kinase domain. ATP contacts are provided by residues 15–23 (IGGGSFGEI) and Lys38. Asp128 acts as the Proton acceptor in catalysis. Disordered stretches follow at residues 340–360 (TTTTTSSSQPSNVKNISTVSN) and 377–426 (PSYN…PPAK). Residues 345 to 360 (SSSQPSNVKNISTVSN) show a composition bias toward polar residues. The span at 386 to 404 (QSPQQTTTTTSSSNPNQTT) shows a compositional bias: low complexity. The span at 414–426 (PQSSSTTTKPPAK) shows a compositional bias: polar residues.

The protein belongs to the protein kinase superfamily. CK1 Ser/Thr protein kinase family. Casein kinase I subfamily. In terms of assembly, monomer. Post-translationally, autophosphorylated.

It localises to the cytoplasm. The protein resides in the nucleus. It carries out the reaction L-seryl-[protein] + ATP = O-phospho-L-seryl-[protein] + ADP + H(+). The enzyme catalyses L-threonyl-[protein] + ATP = O-phospho-L-threonyl-[protein] + ADP + H(+). Functionally, casein kinases are operationally defined by their preferential utilization of acidic proteins such as caseins as substrates. Can phosphorylate a large number of proteins. May have a role in DNA repair mechanism and support vegetative growth of the cells. The protein is Casein kinase I (cak1-1) of Dictyostelium discoideum (Social amoeba).